Reading from the N-terminus, the 112-residue chain is Transmembrane protein 14 homolog (112 aa).

Residues 3–23 (VDWFGYVYAATVAAGGIMGYA) traverse the membrane as a helical segment.

Belongs to the TMEM14 family.

It localises to the membrane. The sequence is that of Transmembrane protein 14 homolog from Drosophila melanogaster (Fruit fly).